Here is a 606-residue protein sequence, read N- to C-terminus: NADH-ubiquinone oxidoreductase chain 5 (606 aa).

15 helical membrane passes run 4–24 (FSSL…MMSL), 43–63 (AFIT…ELII), 87–107 (MMFT…SMWY), 117–137 (FFKY…ANNL), 140–160 (LFIG…WWYG), 171–191 (AVLY…WFLT), 213–233 (LIGL…HPWL), 241–261 (TPVS…FLLI), 272–292 (FIQS…AMCA), 310–330 (LGLM…LHIC), 366–386 (MPFT…MPFL), 413–433 (LIAT…ALLG), 457–477 (LLIG…PTTI), 482–502 (MPYY…ILAL), and 582–602 (GLIK…MMLF).

Core subunit of respiratory chain NADH dehydrogenase (Complex I) which is composed of 45 different subunits.

Its subcellular location is the mitochondrion inner membrane. The catalysed reaction is a ubiquinone + NADH + 5 H(+)(in) = a ubiquinol + NAD(+) + 4 H(+)(out). In terms of biological role, core subunit of the mitochondrial membrane respiratory chain NADH dehydrogenase (Complex I) which catalyzes electron transfer from NADH through the respiratory chain, using ubiquinone as an electron acceptor. Essential for the catalytic activity and assembly of complex I. The protein is NADH-ubiquinone oxidoreductase chain 5 (MT-ND5) of Bos indicus (Zebu).